A 147-amino-acid polypeptide reads, in one-letter code: 16 kDa phloem protein 2 (147 aa).

The C2 domain maps to 1 to 103 (MPHGTLEVVL…FVEGSIPPTA (103 aa)). Positions 20, 26, 73, 75, and 81 each coordinate Ca(2+). The segment at 126 to 147 (ENRSRGMDEESYGGWKNSEASY) is disordered.

It depends on Ca(2+) as a cofactor.

Binds to both sense and antisense RNA. Can also bind sheared DNA and dodecamer DNA with a low affinity. Interacts with mesophyll plasmodesmata to mediate its own cell-to-cell transport and potentiate RNA trafficking. May play a role in plant defense signaling. The sequence is that of 16 kDa phloem protein 2 from Arabidopsis thaliana (Mouse-ear cress).